A 436-amino-acid chain; its full sequence is AMSH-like protease (436 aa).

N-acetylmethionine is present on Met1. Ser25 and Ser242 each carry phosphoserine. An MPN domain is found at 269-397 (VVLSRDLCHK…IFRLTNAGML (129 aa)). 7 residues coordinate Zn(2+): His347, His349, Asp360, His362, Cys402, His408, and His410. Positions 347-360 (HTHPTQTAFLSSVD) match the JAMM motif motif.

Belongs to the peptidase M67C family. Zn(2+) is required as a cofactor. As to expression, ubiquitously expressed. Isoform 1 is widely expressed while isoform 2 is testis-specific.

Functionally, zinc metalloprotease that specifically cleaves 'Lys-63'-linked polyubiquitin chains. Acts as a positive regulator of the TORC1 signaling pathway by mediating 'Lys-63'-linked deubiquitination of SESN2, thereby inhibiting SESN2-interaction with the GATOR2 complex. Does not cleave 'Lys-48'-linked polyubiquitin chains. The sequence is that of AMSH-like protease (Stambpl1) from Mus musculus (Mouse).